The primary structure comprises 90 residues: Small ribosomal subunit protein uS17 (90 aa).

This sequence belongs to the universal ribosomal protein uS17 family. Part of the 30S ribosomal subunit.

Its function is as follows. One of the primary rRNA binding proteins, it binds specifically to the 5'-end of 16S ribosomal RNA. The protein is Small ribosomal subunit protein uS17 of Burkholderia thailandensis (strain ATCC 700388 / DSM 13276 / CCUG 48851 / CIP 106301 / E264).